The following is a 340-amino-acid chain: Transcription initiation factor IIB (340 aa).

The segment at 16–49 (VKMICSECREDPPNLVEEFSSGDTVCGSCGLVLG) adopts a TFIIB-type zinc-finger fold. Cys20, Cys23, Cys41, and Cys44 together coordinate Zn(2+). A run of 2 repeats spans residues 128–204 (MCDA…TLQR) and 239–315 (FCNR…LLHA).

This sequence belongs to the TFIIB family. Associates with TFIID-IIA (DA complex) to form TFIID-IIA-IIB (DAB-complex) which is then recognized by polymerase II.

It is found in the nucleus. In terms of biological role, general factor that plays a major role in the activation of eukaryotic genes transcribed by RNA polymerase II. In Schizosaccharomyces pombe (strain 972 / ATCC 24843) (Fission yeast), this protein is Transcription initiation factor IIB (sua7).